We begin with the raw amino-acid sequence, 430 residues long: Adenylosuccinate synthetase (430 aa).

GTP contacts are provided by residues 12 to 18 and 40 to 42; these read GDEGKGK and GHT. Asp-13 serves as the catalytic Proton acceptor. Positions 13 and 40 each coordinate Mg(2+). IMP-binding positions include 13–16, 38–41, Thr-130, Arg-144, Gln-224, Thr-239, and Arg-303; these read DEGK and NAGH. The active-site Proton donor is the His-41. 299–305 is a substrate binding site; it reads TTTGRKR. Residues Arg-305, 331–333, and 413–415 contribute to the GTP site; these read KLD and STS.

Belongs to the adenylosuccinate synthetase family. Homodimer. It depends on Mg(2+) as a cofactor.

The protein resides in the cytoplasm. The catalysed reaction is IMP + L-aspartate + GTP = N(6)-(1,2-dicarboxyethyl)-AMP + GDP + phosphate + 2 H(+). It functions in the pathway purine metabolism; AMP biosynthesis via de novo pathway; AMP from IMP: step 1/2. Its function is as follows. Plays an important role in the de novo pathway of purine nucleotide biosynthesis. Catalyzes the first committed step in the biosynthesis of AMP from IMP. The chain is Adenylosuccinate synthetase from Ruegeria pomeroyi (strain ATCC 700808 / DSM 15171 / DSS-3) (Silicibacter pomeroyi).